We begin with the raw amino-acid sequence, 400 residues long: 1-deoxy-D-xylulose 5-phosphate reductoisomerase (400 aa).

The NADPH site is built by Thr-10, Gly-11, Ser-12, Ile-13, Gly-36, Asn-38, and Asn-124. Lys-125 contacts 1-deoxy-D-xylulose 5-phosphate. Glu-126 lines the NADPH pocket. Asp-150 contacts Mn(2+). 1-deoxy-D-xylulose 5-phosphate is bound by residues Ser-151, Glu-152, Ser-186, and His-209. A Mn(2+)-binding site is contributed by Glu-152. Gly-215 is a binding site for NADPH. Residues Ser-222, Asn-227, Lys-228, and Glu-231 each coordinate 1-deoxy-D-xylulose 5-phosphate. Position 231 (Glu-231) interacts with Mn(2+).

The protein belongs to the DXR family. It depends on Mg(2+) as a cofactor. The cofactor is Mn(2+).

The catalysed reaction is 2-C-methyl-D-erythritol 4-phosphate + NADP(+) = 1-deoxy-D-xylulose 5-phosphate + NADPH + H(+). It participates in isoprenoid biosynthesis; isopentenyl diphosphate biosynthesis via DXP pathway; isopentenyl diphosphate from 1-deoxy-D-xylulose 5-phosphate: step 1/6. Its function is as follows. Catalyzes the NADPH-dependent rearrangement and reduction of 1-deoxy-D-xylulose-5-phosphate (DXP) to 2-C-methyl-D-erythritol 4-phosphate (MEP). The chain is 1-deoxy-D-xylulose 5-phosphate reductoisomerase from Aliivibrio salmonicida (strain LFI1238) (Vibrio salmonicida (strain LFI1238)).